The primary structure comprises 160 residues: Small ribosomal subunit protein uS7 (160 aa).

Belongs to the universal ribosomal protein uS7 family. As to quaternary structure, part of the 30S ribosomal subunit. Contacts proteins S9 and S11.

Its function is as follows. One of the primary rRNA binding proteins, it binds directly to 16S rRNA where it nucleates assembly of the head domain of the 30S subunit. Is located at the subunit interface close to the decoding center, probably blocks exit of the E-site tRNA. This chain is Small ribosomal subunit protein uS7, found in Rickettsia rickettsii (strain Iowa).